Here is a 288-residue protein sequence, read N- to C-terminus: L-xylulose reductase (288 aa).

Ile-39, Asn-113, and Lys-147 together coordinate NADP(+). The active-site Proton donor is Ser-181. The NADP(+) site is built by Tyr-196, Lys-200, Ile-228, and Thr-230. Catalysis depends on Tyr-196, which acts as the Proton acceptor. Residue Lys-200 is the Lowers pKa of active site Tyr of the active site.

It belongs to the short-chain dehydrogenases/reductases (SDR) family.

The catalysed reaction is xylitol + NADP(+) = L-xylulose + NADPH + H(+). It participates in carbohydrate degradation; L-arabinose degradation via L-arabinitol; D-xylulose 5-phosphate from L-arabinose (fungal route): step 3/5. L-xylulose reductase involved in the catabolism of L-arabinose through an oxidoreductive pathway. Catalyzes the NADPH-dependent reduction of L-xylulose. Is also able to convert D-xylulose, D-ribulose, L-sorbose, and D-fructose to their corresponding polyols. In Hypocrea jecorina (strain QM6a) (Trichoderma reesei), this protein is L-xylulose reductase.